A 175-amino-acid polypeptide reads, in one-letter code: Disulfide bond formation protein B (175 aa).

The Cytoplasmic segment spans residues 1-13 (MVSNWLDAAPRRV). A helical transmembrane segment spans residues 14 to 30 (LALISAACIAMLAFGMY). Residues 31 to 48 (LQHVVGLEPCPMCIVQRY) are Periplasmic-facing. Cysteines 40 and 43 form a disulfide. Residues 49–65 (ALIGVAVFTGLGSLRGG) traverse the membrane as a helical segment. Over 66–70 (RGWWM) the chain is Cytoplasmic. A helical transmembrane segment spans residues 71-88 (TWGVLALLLSGFGAFVAA). The Periplasmic segment spans residues 89–144 (RQSWLQWYPPEIATCGRDFYGMIENFPISRAIPMIFRGSGDCAAIDWTFLGGSIAN). The cysteines at positions 103 and 130 are disulfide-linked. Residues 145 to 163 (WSFVCFVVMALVLLVMLLR) traverse the membrane as a helical segment. The Cytoplasmic segment spans residues 164–175 (APRPARGGFSAA).

It belongs to the DsbB family.

It is found in the cell inner membrane. In terms of biological role, required for disulfide bond formation in some periplasmic proteins. Acts by oxidizing the DsbA protein. The sequence is that of Disulfide bond formation protein B from Paracidovorax citrulli (strain AAC00-1) (Acidovorax citrulli).